A 571-amino-acid chain; its full sequence is Membrane protein insertase YidC (571 aa).

The helical transmembrane segment at 4 to 24 threads the bilayer; the sequence is TRVFLIFAWLMVAVLLWMEWS. The interval 29 to 76 is disordered; the sequence is APTPAPTTTSAPAAAQSVPGATPGSVPNAQVPGAPGQAAVQAQASATP. Low complexity-rich tracts occupy residues 34–43 and 57–76; these read PTTTSAPAAA and AQVP…SATP. 4 consecutive transmembrane segments (helical) span residues 369-389, 440-460, 483-503, and 518-538; these read LVGN…LVLY, GGCL…WVLV, YFIL…LTPA, and PLVF…YWVV.

It belongs to the OXA1/ALB3/YidC family. Type 1 subfamily. In terms of assembly, interacts with the Sec translocase complex via SecD. Specifically interacts with transmembrane segments of nascent integral membrane proteins during membrane integration.

The protein localises to the cell inner membrane. Required for the insertion and/or proper folding and/or complex formation of integral membrane proteins into the membrane. Involved in integration of membrane proteins that insert both dependently and independently of the Sec translocase complex, as well as at least some lipoproteins. Aids folding of multispanning membrane proteins. In Stenotrophomonas maltophilia (strain R551-3), this protein is Membrane protein insertase YidC.